The sequence spans 474 residues: tRNA-2-methylthio-N(6)-dimethylallyladenosine synthase (474 aa).

Residues 3-120 enclose the MTTase N-terminal domain; sequence KKLHIKTWGC…LPEMINSVRG (118 aa). [4Fe-4S] cluster-binding residues include cysteine 12, cysteine 49, cysteine 83, cysteine 157, cysteine 161, and cysteine 164. The region spanning 143 to 375 is the Radical SAM core domain; the sequence is RAEGPTAFVS…QERINQQAMA (233 aa). The region spanning 378-441 is the TRAM domain; sequence RRMLGTTQRI…PNSLRGKVVR (64 aa).

Belongs to the methylthiotransferase family. MiaB subfamily. As to quaternary structure, monomer. The cofactor is [4Fe-4S] cluster.

The protein localises to the cytoplasm. The catalysed reaction is N(6)-dimethylallyladenosine(37) in tRNA + (sulfur carrier)-SH + AH2 + 2 S-adenosyl-L-methionine = 2-methylsulfanyl-N(6)-dimethylallyladenosine(37) in tRNA + (sulfur carrier)-H + 5'-deoxyadenosine + L-methionine + A + S-adenosyl-L-homocysteine + 2 H(+). Its function is as follows. Catalyzes the methylthiolation of N6-(dimethylallyl)adenosine (i(6)A), leading to the formation of 2-methylthio-N6-(dimethylallyl)adenosine (ms(2)i(6)A) at position 37 in tRNAs that read codons beginning with uridine. This is tRNA-2-methylthio-N(6)-dimethylallyladenosine synthase from Salmonella paratyphi A (strain ATCC 9150 / SARB42).